An 886-amino-acid polypeptide reads, in one-letter code: Extended synaptotagmin-3 (886 aa).

The disordered stretch occupies residues 1–21; sequence MRAEEPCAPGAPSALGAQRTP. The Cytoplasmic portion of the chain corresponds to 1–29; it reads MRAEEPCAPGAPSALGAQRTPGPELRLSS. Helical transmembrane passes span 30-50 and 51-71; these read QLLP…GPVY and LAGY…LWMW. Residues 72 to 886 are Cytoplasmic-facing; that stretch reads WRRNRRGKLG…ELTPNGQPRS (815 aa). The region spanning 114–291 is the SMP-LTD domain; the sequence is DVERVEWANK…LPNRVTVPVK (178 aa). C2 domains lie at 291-408 and 426-566; these read KKGL…DEWF and SLLT…QLDH. 9 residues coordinate Ca(2+): Lys321, Asp322, Asp332, Asp379, Glu380, Asp381, Asp383, Asp385, and Asp386. Residues 613–673 form a disordered region; sequence QGPKAQPQEE…PEPKGKDSAK (61 aa). Residues 642–659 show a composition bias toward low complexity; it reads RSTTTTTSATTVATEPTS. Residues 664-673 show a composition bias toward basic and acidic residues; it reads PEPKGKDSAK. The C2 3 domain maps to 754–876; sequence QLGEIQLTVR…DLIKGFSQWY (123 aa). The required for phosphatidylinositol 4,5-bisphosphate-dependent location at the cell membrane stretch occupies residues 801-808; the sequence is RKWACRKK.

It belongs to the extended synaptotagmin family. As to quaternary structure, interacts with ESYT1 and ESYT2. As to expression, widely expressed with high level in cerebellum and skin.

The protein resides in the cell membrane. Its subcellular location is the endoplasmic reticulum membrane. Its function is as follows. Binds glycerophospholipids in a barrel-like domain and may play a role in cellular lipid transport. Tethers the endoplasmic reticulum to the cell membrane and promotes the formation of appositions between the endoplasmic reticulum and the cell membrane. This Homo sapiens (Human) protein is Extended synaptotagmin-3.